Here is a 179-residue protein sequence, read N- to C-terminus: Ribosome-recycling factor (179 aa).

The protein belongs to the RRF family.

The protein localises to the cytoplasm. Functionally, responsible for the release of ribosomes from messenger RNA at the termination of protein biosynthesis. May increase the efficiency of translation by recycling ribosomes from one round of translation to another. In Chlamydia muridarum (strain MoPn / Nigg), this protein is Ribosome-recycling factor.